Reading from the N-terminus, the 284-residue chain is N-acylphosphatidylethanolamine synthase (284 aa).

The chain crosses the membrane as a helical span at residues 21-37 (TVIMAVSAFAKAVANLC). The HXXXXD motif motif lies at 67–72 (HMSTLD). The segment at 122-163 (GGGIYQENMNEALQRLKDGSWLHTFPEGKVFQDDVPIRRLKW) is hydrophilic.

Belongs to the taffazin family. Essentially present in young tissues. Expressed in roots, cotyledons, leaves, and shoot and root apical meristems.

It localises to the cell membrane. Acyltransferase that catalyzes the N-acylation of phosphatidylethanolamine to form N-acylphosphatidylethanolamine (N-acyl-PE) (e.g. NAPEs containing C16:0, C16:1, C18:0, and C18:1). Also mediates the formation of acylphosphatidylglycerol (acyl-PG) from lysoglycerophospholipid by O-acylation. Uses acyl-CoA as acyl donors. Acylates 1-acyllysophosphatidylethanolamine (1-acyllyso-PE) and 1-acyllysophosphatidylglycerol (1-acyllyso-PG) at the sn-2-position. This is N-acylphosphatidylethanolamine synthase from Arabidopsis thaliana (Mouse-ear cress).